Reading from the N-terminus, the 190-residue chain is Protein hunchback (190 aa).

Disordered regions lie at residues 13-59 (EPMS…SSNL), 86-110 (AAMT…PNPM), and 142-190 (QTND…KYMA). Over residues 17–31 (HHHHHSHHHGHHHML) the composition is skewed to basic residues. Over residues 90–100 (PSPSNNDQNSP) the composition is skewed to polar residues. Residues 171 to 190 (EPEKDHDLISNSSEDMKYMA) are compositionally biased toward basic and acidic residues.

It belongs to the hunchback C2H2-type zinc-finger protein family.

Its subcellular location is the nucleus. Gap class segmentation protein that controls development of head structures. This Scaptomyza crassifemur (Fruit fly) protein is Protein hunchback (hb).